A 384-amino-acid polypeptide reads, in one-letter code: D-galactosamine-6-phosphate deaminase AgaS (384 aa).

SIS domains lie at 45–197 (LEPL…SQTF) and 215–364 (SEGV…PDTP).

Belongs to the SIS family. AgaS subfamily.

The catalysed reaction is D-galactosamine 6-phosphate + H2O = D-tagatopyranose 1-phosphate + NH4(+). In terms of biological role, catalyzes the isomerization-deamination of galactosamine 6-phosphate to form tagatofuranose 6-phosphate and ammonium ion. The protein is D-galactosamine-6-phosphate deaminase AgaS of Escherichia coli.